We begin with the raw amino-acid sequence, 176 residues long: Large ribosomal subunit protein uL10 (176 aa).

The protein belongs to the universal ribosomal protein uL10 family. Part of the ribosomal stalk of the 50S ribosomal subunit. The N-terminus interacts with L11 and the large rRNA to form the base of the stalk. The C-terminus forms an elongated spine to which L12 dimers bind in a sequential fashion forming a multimeric L10(L12)X complex.

Its function is as follows. Forms part of the ribosomal stalk, playing a central role in the interaction of the ribosome with GTP-bound translation factors. The sequence is that of Large ribosomal subunit protein uL10 (rplJ) from Streptomyces antibioticus.